The chain runs to 65 residues: Large ribosomal subunit protein uL29 (65 aa).

Belongs to the universal ribosomal protein uL29 family.

This is Large ribosomal subunit protein uL29 from Methylococcus capsulatus (strain ATCC 33009 / NCIMB 11132 / Bath).